The primary structure comprises 401 residues: Cytochrome P450 BJ-1 (401 aa).

Cys350 is a heme binding site.

This sequence belongs to the cytochrome P450 family. Heme serves as cofactor.

In terms of biological role, cytochromes P450 are a group of heme-thiolate monooxygenases. They oxidize a variety of structurally unrelated compounds, including steroids, fatty acids, and xenobiotics. This is Cytochrome P450 BJ-1 (cyp112) from Bradyrhizobium diazoefficiens (strain JCM 10833 / BCRC 13528 / IAM 13628 / NBRC 14792 / USDA 110).